The sequence spans 241 residues: 1-(5-phosphoribosyl)-5-[(5-phosphoribosylamino)methylideneamino] imidazole-4-carboxamide isomerase (241 aa).

The Proton acceptor role is filled by aspartate 10. Aspartate 131 (proton donor) is an active-site residue.

The protein belongs to the HisA/HisF family.

The protein resides in the cytoplasm. It catalyses the reaction 1-(5-phospho-beta-D-ribosyl)-5-[(5-phospho-beta-D-ribosylamino)methylideneamino]imidazole-4-carboxamide = 5-[(5-phospho-1-deoxy-D-ribulos-1-ylimino)methylamino]-1-(5-phospho-beta-D-ribosyl)imidazole-4-carboxamide. It participates in amino-acid biosynthesis; L-histidine biosynthesis; L-histidine from 5-phospho-alpha-D-ribose 1-diphosphate: step 4/9. The protein is 1-(5-phosphoribosyl)-5-[(5-phosphoribosylamino)methylideneamino] imidazole-4-carboxamide isomerase of Bifidobacterium longum (strain NCC 2705).